The sequence spans 623 residues: MHRYRSHTCGDLRETDALQPTRLSGWCHRIRDHGGVLFIDLRDHYGITQCVVDPDSGAFPLAEKLRSEWVVRIDGLVRQRPAGTENIEMPTGLIEVYVTEIEVLGAAAELPLPVFGDQNYPEDMRLRYRFLDLRREKLHNNIMLRGRVIDSLRARMKGQGFFEFQTPILTASSPEGARDFLVPSRLHPGKFYALPQAPQQFKQLLMTAGFDRYFQIAPCFRDEDLRADRSLEFYQLDIEMSFVTQEDIFATVEPVLRGVFEEFGEGFAVTPEFPRIPYAETMLKYGTDKPDLRNPLVIVDVTEEFSREDVSFNAFKNVIKQGGVVRAIPAPGAGAQPRSFFDKLNDWARGEGAAGLGYVIFEGDAGALVGKGPIAKFLPADVQQAIAAKAGLKSGDAVFFACDRPDRAAKLAGAARLRIGSELKLSKTGVFELCWIVDFPMYEWNEDEKRIDFSHNPFSMPNCNLEQFLALETGVREEIVGIDRGERNRDLNESNELRKRILEITAFQYDVVCNGFELSSGAIRNHRPDIMRKAFALAGYDETVLEQKFGGMYRAFHYGAPPHGGIAPGVDRIVMLLAGEENLREIVAFPMNQRGEDLLLGAPSNVTAKQLRELSIKLNLPEK.

Position 175 (Glu-175) interacts with L-aspartate. Positions 199–202 (QQFK) are aspartate. L-aspartate is bound by residues Arg-221 and His-455. Residue 221-223 (RDE) coordinates ATP. Residue Glu-517 participates in ATP binding. Arg-524 contacts L-aspartate. Residue 569 to 572 (GVDR) coordinates ATP.

Belongs to the class-II aminoacyl-tRNA synthetase family. Type 1 subfamily. Homodimer.

The protein resides in the cytoplasm. It carries out the reaction tRNA(Asx) + L-aspartate + ATP = L-aspartyl-tRNA(Asx) + AMP + diphosphate. Aspartyl-tRNA synthetase with relaxed tRNA specificity since it is able to aspartylate not only its cognate tRNA(Asp) but also tRNA(Asn). Reaction proceeds in two steps: L-aspartate is first activated by ATP to form Asp-AMP and then transferred to the acceptor end of tRNA(Asp/Asn). This chain is Aspartate--tRNA(Asp/Asn) ligase, found in Methylocella silvestris (strain DSM 15510 / CIP 108128 / LMG 27833 / NCIMB 13906 / BL2).